Here is a 494-residue protein sequence, read N- to C-terminus: Apolipoprotein N-acyltransferase (494 aa).

The next 6 membrane-spanning stretches (helical) occupy residues 16 to 36, 41 to 61, 62 to 82, 133 to 153, 173 to 193, and 202 to 222; these read TVGG…FIWI, LWAS…AILL, SYRW…IAFS, LIWG…FGLG, GGLA…IFAF, and LFAL…ILLA. The region spanning 235–461 is the CN hydrolase domain; it reads WQTNIPTRQK…EGVGVIDINV (227 aa). Residue glutamate 276 is the Proton acceptor of the active site. Lysine 325 is an active-site residue. Residue cysteine 373 is the Nucleophile of the active site. A helical membrane pass occupies residues 468 to 488; the sequence is YVRWGEIPLISSLLIVLCFIA.

The protein belongs to the CN hydrolase family. Apolipoprotein N-acyltransferase subfamily.

It is found in the cell inner membrane. The catalysed reaction is N-terminal S-1,2-diacyl-sn-glyceryl-L-cysteinyl-[lipoprotein] + a glycerophospholipid = N-acyl-S-1,2-diacyl-sn-glyceryl-L-cysteinyl-[lipoprotein] + a 2-acyl-sn-glycero-3-phospholipid + H(+). It functions in the pathway protein modification; lipoprotein biosynthesis (N-acyl transfer). Functionally, catalyzes the phospholipid dependent N-acylation of the N-terminal cysteine of apolipoprotein, the last step in lipoprotein maturation. The protein is Apolipoprotein N-acyltransferase of Prochlorococcus marinus (strain SARG / CCMP1375 / SS120).